The chain runs to 274 residues: Large ribosomal subunit protein uL2cz/uL2cy (274 aa).

The tract at residues 224–274 (NPVDHPHGGGEGRAPIGRKKPTTPWGYPALGRRSRKRNKYSDNLILRRRSK) is disordered.

This sequence belongs to the universal ribosomal protein uL2 family. As to quaternary structure, part of the 50S ribosomal subunit.

It localises to the plastid. It is found in the chloroplast. This chain is Large ribosomal subunit protein uL2cz/uL2cy (rpl2-A), found in Panax ginseng (Korean ginseng).